A 481-amino-acid chain; its full sequence is Protein nucleotidyltransferase YdiU (481 aa).

ATP is bound by residues Gly85, Gly87, Arg88, Lys108, Asp120, Gly121, Arg172, and Arg179. Asp248 acts as the Proton acceptor in catalysis. Mg(2+)-binding residues include Asn249 and Asp258. Asp258 provides a ligand contact to ATP.

Belongs to the SELO family. The cofactor is Mg(2+). Requires Mn(2+) as cofactor.

It catalyses the reaction L-seryl-[protein] + ATP = 3-O-(5'-adenylyl)-L-seryl-[protein] + diphosphate. It carries out the reaction L-threonyl-[protein] + ATP = 3-O-(5'-adenylyl)-L-threonyl-[protein] + diphosphate. The catalysed reaction is L-tyrosyl-[protein] + ATP = O-(5'-adenylyl)-L-tyrosyl-[protein] + diphosphate. The enzyme catalyses L-histidyl-[protein] + UTP = N(tele)-(5'-uridylyl)-L-histidyl-[protein] + diphosphate. It catalyses the reaction L-seryl-[protein] + UTP = O-(5'-uridylyl)-L-seryl-[protein] + diphosphate. It carries out the reaction L-tyrosyl-[protein] + UTP = O-(5'-uridylyl)-L-tyrosyl-[protein] + diphosphate. Functionally, nucleotidyltransferase involved in the post-translational modification of proteins. It can catalyze the addition of adenosine monophosphate (AMP) or uridine monophosphate (UMP) to a protein, resulting in modifications known as AMPylation and UMPylation. This Cereibacter sphaeroides (strain ATCC 17025 / ATH 2.4.3) (Rhodobacter sphaeroides) protein is Protein nucleotidyltransferase YdiU.